A 285-amino-acid polypeptide reads, in one-letter code: uncharacterized protein (285 aa).

2 disordered regions span residues 115–139 and 152–183; these read AAGK…QERN and EHDV…NRGV. Composition is skewed to basic and acidic residues over residues 128–138 and 152–170; these read KEADVQTKQER and EHDV…DLKT.

This is an uncharacterized protein from Escherichia coli (strain K12).